We begin with the raw amino-acid sequence, 591 residues long: MNQGKIITVSGPLVVASGMQEANIQDICRVGHLGLVGEIIEMRRDQASIQVYEETSGIGPGEPVVTTGCPLSVELGPGLISEMFDGIQRPLDRFQKATDSDFLIRGVAIPSLDRKAKWAFIPKLSVGQEVVAGDILGTVQETAVIEHRIMVPYKVSGTLVAIHAGDFTVTDTVYEIKQEDGSIYQGSLMQTWPVRQSRPVAQKLIPVEPLVTGQRVIDTFFPVTKGGAAAVPGPFGAGKTVVQHQIAKFANVDIVIYVGCGERGNEMTDVLNEFPELIDPNTGQSIMERTVLIANTSNMPVAAREASIYTGITIAEYFRDMGYSVAIMADSTSRWAEALREMSGRLQEMPGDEGYPAYLGSRIAEYYERAGRVRTLGSQEREGTITAIGAVSPPGGDISEPVTQNTLRIVKVFWGLDAPLAQRRHFPAINWLTSYSLYQDDVGSYIDRKQQSNWSNKVTRAMAILQREASLEEIVRLVGLDSLSEQDRLTMAVARQIREDYLQQNAFDSVDTFTSFPKQEAMLTNILTFNEEASKALSLGAYFNEIMEGTAQVRDRIARSKFIPEENLEQIKGFTQKVTKEIHHVLAKGGI.

Position 233–240 (233–240 (GPFGAGKT)) interacts with ATP.

Belongs to the ATPase alpha/beta chains family.

It catalyses the reaction ATP + H2O + 4 H(+)(in) = ADP + phosphate + 5 H(+)(out). Its function is as follows. Produces ATP from ADP in the presence of a proton gradient across the membrane. The V-type alpha chain is a catalytic subunit. This chain is V-type ATP synthase alpha chain, found in Streptococcus pyogenes serotype M5 (strain Manfredo).